Here is a 711-residue protein sequence, read N- to C-terminus: Putative membrane protein IgaA homolog (711 aa).

Residue M1 is a topological domain, periplasmic. Residues S2–I22 traverse the membrane as a helical segment. Topologically, residues K23–R204 are cytoplasmic. 2 consecutive transmembrane segments (helical) span residues E205–V225 and F226–F246. Residues A247–R339 are Cytoplasmic-facing. Residues S340 to L360 form a helical membrane-spanning segment. Residues D361 to Y655 are Periplasmic-facing. A helical membrane pass occupies residues L656–A676. The Cytoplasmic portion of the chain corresponds to W677–E711.

It belongs to the IgaA family.

The protein localises to the cell inner membrane. The polypeptide is Putative membrane protein IgaA homolog (yrfF) (Escherichia coli O157:H7).